The following is a 330-amino-acid chain: tRNA U34 carboxymethyltransferase (330 aa).

Carboxy-S-adenosyl-L-methionine-binding positions include Lys-91, Trp-105, Lys-110, Gly-130, 152-154 (DPS), 181-182 (IE), Met-196, Tyr-200, and Arg-315.

The protein belongs to the class I-like SAM-binding methyltransferase superfamily. CmoB family. In terms of assembly, homotetramer.

The catalysed reaction is carboxy-S-adenosyl-L-methionine + 5-hydroxyuridine(34) in tRNA = 5-carboxymethoxyuridine(34) in tRNA + S-adenosyl-L-homocysteine + H(+). Catalyzes carboxymethyl transfer from carboxy-S-adenosyl-L-methionine (Cx-SAM) to 5-hydroxyuridine (ho5U) to form 5-carboxymethoxyuridine (cmo5U) at position 34 in tRNAs. The sequence is that of tRNA U34 carboxymethyltransferase from Shewanella sp. (strain ANA-3).